We begin with the raw amino-acid sequence, 227 residues long: Cytochrome c oxidase subunit 2 (227 aa).

The Mitochondrial intermembrane portion of the chain corresponds to 1–14; it reads MAYPFQLGLQDASS. A helical transmembrane segment spans residues 15–45; that stretch reads PIMEELMNFHDHTLMIVFLISSLVLYLMALM. Topologically, residues 46–59 are mitochondrial matrix; that stretch reads LSTKLIHTSTMDAQ. A helical membrane pass occupies residues 60-87; that stretch reads EVETIWTILPAIILIMIALPSLRILYMM. Residues 88–227 lie on the Mitochondrial intermembrane side of the membrane; it reads DEINNPILTV…LFENWSMSMT (140 aa). Positions 161, 196, 198, 200, 204, and 207 each coordinate Cu cation. Mg(2+) is bound at residue glutamate 198.

Belongs to the cytochrome c oxidase subunit 2 family. As to quaternary structure, component of the cytochrome c oxidase (complex IV, CIV), a multisubunit enzyme composed of 14 subunits. The complex is composed of a catalytic core of 3 subunits MT-CO1, MT-CO2 and MT-CO3, encoded in the mitochondrial DNA, and 11 supernumerary subunits COX4I, COX5A, COX5B, COX6A, COX6B, COX6C, COX7A, COX7B, COX7C, COX8 and NDUFA4, which are encoded in the nuclear genome. The complex exists as a monomer or a dimer and forms supercomplexes (SCs) in the inner mitochondrial membrane with NADH-ubiquinone oxidoreductase (complex I, CI) and ubiquinol-cytochrome c oxidoreductase (cytochrome b-c1 complex, complex III, CIII), resulting in different assemblies (supercomplex SCI(1)III(2)IV(1) and megacomplex MCI(2)III(2)IV(2)). Found in a complex with TMEM177, COA6, COX18, COX20, SCO1 and SCO2. Interacts with TMEM177 in a COX20-dependent manner. Interacts with COX20. Interacts with COX16. The cofactor is Cu cation.

It localises to the mitochondrion inner membrane. It carries out the reaction 4 Fe(II)-[cytochrome c] + O2 + 8 H(+)(in) = 4 Fe(III)-[cytochrome c] + 2 H2O + 4 H(+)(out). Its function is as follows. Component of the cytochrome c oxidase, the last enzyme in the mitochondrial electron transport chain which drives oxidative phosphorylation. The respiratory chain contains 3 multisubunit complexes succinate dehydrogenase (complex II, CII), ubiquinol-cytochrome c oxidoreductase (cytochrome b-c1 complex, complex III, CIII) and cytochrome c oxidase (complex IV, CIV), that cooperate to transfer electrons derived from NADH and succinate to molecular oxygen, creating an electrochemical gradient over the inner membrane that drives transmembrane transport and the ATP synthase. Cytochrome c oxidase is the component of the respiratory chain that catalyzes the reduction of oxygen to water. Electrons originating from reduced cytochrome c in the intermembrane space (IMS) are transferred via the dinuclear copper A center (CU(A)) of subunit 2 and heme A of subunit 1 to the active site in subunit 1, a binuclear center (BNC) formed by heme A3 and copper B (CU(B)). The BNC reduces molecular oxygen to 2 water molecules using 4 electrons from cytochrome c in the IMS and 4 protons from the mitochondrial matrix. The polypeptide is Cytochrome c oxidase subunit 2 (MT-CO2) (Gerbillus gerbillus (Lesser Egyptian gerbil)).